The primary structure comprises 871 residues: Protein translocase subunit SecA (871 aa).

ATP-binding positions include Gln80, 98-102 (GEGKT), and Asp537.

Belongs to the SecA family. As to quaternary structure, monomer and homodimer. Part of the essential Sec protein translocation apparatus which comprises SecA, SecYEG and auxiliary proteins SecDF. Other proteins may also be involved. A single SecA monomer interacts with SecY in the channel.

It localises to the cell inner membrane. It is found in the cytoplasm. It carries out the reaction ATP + H2O + cellular proteinSide 1 = ADP + phosphate + cellular proteinSide 2.. Its function is as follows. Part of the Sec protein translocase complex. Interacts with the SecYEG preprotein conducting channel. Has a central role in coupling the hydrolysis of ATP to the transfer of proteins into and across the cell membrane, serving as an ATP-driven molecular motor driving the stepwise translocation of polypeptide chains across the membrane. The sequence is that of Protein translocase subunit SecA from Thermotoga maritima (strain ATCC 43589 / DSM 3109 / JCM 10099 / NBRC 100826 / MSB8).